We begin with the raw amino-acid sequence, 608 residues long: Translation initiation factor RLI1 (608 aa).

2 4Fe-4S ferredoxin-type domains span residues 7–39 (RIAI…KLCI) and 46–75 (KIAF…IINL). 2 consecutive ABC transporter domains span residues 70-320 (IQII…FLDG) and 345-568 (LQND…LKNL). ATP is bound at residue 110 to 117 (GTNGIGKS). Ser349 is subject to Phosphoserine. 385–392 (GENGTGKT) is an ATP binding site.

This sequence belongs to the ABC transporter superfamily. ABCE family. As to quaternary structure, component of the multifactor complex (MFC) composed of at least RLI1, the eIF2 subunit SUI2, TIF5/eIF5, and the eIF3 subunits PRT1, HCR1, NIP1, RPG1, TIF34 and TIF35. The complex associates with pre-initiation complexes. Interacts with the complex YAE1:LTO1; the complex bridges the interaction between the CIA complex and RLI1.

The protein localises to the cytoplasm. Its subcellular location is the nucleus. In terms of biological role, component of the multifactor complex (MFC) involved in translation initiation. Required for the binding of MFC to the 40S ribosome. Required for the processing and nuclear export of the 60S and 40S ribosomal subunits. The sequence is that of Translation initiation factor RLI1 (RLI1) from Saccharomyces cerevisiae (strain ATCC 204508 / S288c) (Baker's yeast).